Reading from the N-terminus, the 1291-residue chain is Tat-binding homolog 7 (1291 aa).

The segment at 1–345 is disordered; that stretch reads MPRSDGFSPR…HNRGERERGR (345 aa). Residues 64–82 are compositionally biased toward basic and acidic residues; it reads RYYEEEYHEAISSEEDERR. Polar residues predominate over residues 88–99; it reads SSNSMTYRQQVM. Positions 226–257 are enriched in acidic residues; it reads EEEEEGAEEDEQSGEKDPEEEEDDSSNAESSE. The span at 298 to 311 shows a compositional bias: basic residues; the sequence is NRHHRNRNGSRRRR. 432–439 serves as a coordination point for ATP; it reads GPPGTGKT. The Bromo domain maps to 914–1022; the sequence is ALQRQMRLFF…DAIDDLIECE (109 aa). The segment at 1110–1194 is disordered; the sequence is KSEEGTSTST…MKDASKDSTP (85 aa). Residues 1128–1142 are compositionally biased toward basic residues; the sequence is NKKKLLKKKKGQKKS. The span at 1148-1164 shows a compositional bias: acidic residues; that stretch reads EEHDEDSTVEDAGEDTI. The segment covering 1168 to 1190 has biased composition (basic and acidic residues); that stretch reads LEIKKNQETPNSEHDIEMKDASK.

Belongs to the AAA ATPase family.

In terms of biological role, thought to form a complex that enhances transcription from repetitive DNA sequences by modulating chromatin structure. This chain is Tat-binding homolog 7 (lex-1), found in Caenorhabditis elegans.